We begin with the raw amino-acid sequence, 231 residues long: 7-cyano-7-deazaguanine synthase (231 aa).

Residue 8 to 18 (FSGGQDSTTCL) participates in ATP binding. Zn(2+)-binding residues include Cys-188, Cys-197, Cys-200, and Cys-203.

Belongs to the QueC family. Zn(2+) is required as a cofactor.

The enzyme catalyses 7-carboxy-7-deazaguanine + NH4(+) + ATP = 7-cyano-7-deazaguanine + ADP + phosphate + H2O + H(+). The protein operates within purine metabolism; 7-cyano-7-deazaguanine biosynthesis. In terms of biological role, catalyzes the ATP-dependent conversion of 7-carboxy-7-deazaguanine (CDG) to 7-cyano-7-deazaguanine (preQ(0)). In Shigella flexneri serotype 5b (strain 8401), this protein is 7-cyano-7-deazaguanine synthase.